An 80-amino-acid chain; its full sequence is Cell division protein ZapB (80 aa).

Residues 3-80 (LEILEQLEAK…GLLGKMEEVE (78 aa)) adopt a coiled-coil conformation. The disordered stretch occupies residues 41-62 (LEQANNGRSEVEQEAQKARDEQ). Positions 49–62 (SEVEQEAQKARDEQ) are enriched in basic and acidic residues.

Belongs to the ZapB family. As to quaternary structure, homodimer. The ends of the coiled-coil dimer bind to each other, forming polymers. Interacts with FtsZ.

The protein localises to the cytoplasm. Functionally, non-essential, abundant cell division factor that is required for proper Z-ring formation. It is recruited early to the divisome by direct interaction with FtsZ, stimulating Z-ring assembly and thereby promoting cell division earlier in the cell cycle. Its recruitment to the Z-ring requires functional FtsA or ZipA. This is Cell division protein ZapB from Aliivibrio salmonicida (strain LFI1238) (Vibrio salmonicida (strain LFI1238)).